Consider the following 132-residue polypeptide: Small ribosomal subunit protein uS8 (132 aa).

The protein belongs to the universal ribosomal protein uS8 family. In terms of assembly, part of the 30S ribosomal subunit. Contacts proteins S5 and S12.

In terms of biological role, one of the primary rRNA binding proteins, it binds directly to 16S rRNA central domain where it helps coordinate assembly of the platform of the 30S subunit. In Parvibaculum lavamentivorans (strain DS-1 / DSM 13023 / NCIMB 13966), this protein is Small ribosomal subunit protein uS8.